The primary structure comprises 310 residues: Olfactory receptor 5AR1 (310 aa).

At 1–25 the chain is on the extracellular side; that stretch reads MDKENHSVVTEFVFMGITQDPQLQI. An N-linked (GlcNAc...) asparagine glycan is attached at Asn5. Residues 26-46 traverse the membrane as a helical segment; it reads IFFVVFLLVYLVNVIGNVGMI. Residues 47 to 54 lie on the Cytoplasmic side of the membrane; sequence ILIITDSQ. Residues 55–75 traverse the membrane as a helical segment; the sequence is LHTPMYFFLCNLSFVDLGYSS. At 76–99 the chain is on the extracellular side; it reads AIAPRMLADFLTKHKVISFSSCAT. Cys97 and Cys189 are disulfide-bonded. Residues 100–120 traverse the membrane as a helical segment; sequence QFAFFVGFVDAECYVLAAMAY. Residues 121–133 are Cytoplasmic-facing; the sequence is DRFVAICRPLHYS. The helical transmembrane segment at 134–154 threads the bilayer; the sequence is TLMSKKVCLVLMLGSYFAGLV. Topologically, residues 155–196 are extracellular; it reads SLVAHTSLTFSLSYCGSNIINHFFCEIPPLLALSCSDTYISE. The chain crosses the membrane as a helical span at residues 197 to 217; the sequence is ILLFSLCGFIEFSTILIIFIS. Cys203 contacts Cu cation. Topologically, residues 218–237 are cytoplasmic; that stretch reads YAFILIAIIRIRSAEGRLKA. A helical membrane pass occupies residues 238–258; sequence FSTCGSHLTGVTLFYGTVMFM. Positions 256 and 261 each coordinate Cu cation. Over 259–271 the chain is Extracellular; sequence YLRPTSSYSLDQD. Residues 272–292 traverse the membrane as a helical segment; it reads KWASVFYTIIIPMLNPLIYSL. Residues 293–310 are Cytoplasmic-facing; sequence RNKDVKAAFKKLIGKKPQ.

This sequence belongs to the G-protein coupled receptor 1 family.

The protein localises to the cell membrane. Its activity is regulated as follows. Copper binding enhances receptor activity in response to odorant binding. Functionally, olfactory receptor that is activated by the binding of organosulfur odorants with thioether groups such as (methylthio)methanethiol (MTMT). The activity of this receptor is mediated by G proteins which activate adenylyl cyclase. The sequence is that of Olfactory receptor 5AR1 from Mus musculus (Mouse).